Here is a 117-residue protein sequence, read N- to C-terminus: Hydrogenase maturation factor HypA (117 aa).

His-2 contributes to the Ni(2+) binding site. Residues Cys-73, Cys-76, Cys-89, and Cys-92 each coordinate Zn(2+).

Belongs to the HypA/HybF family.

Involved in the maturation of [NiFe] hydrogenases. Required for nickel insertion into the metal center of the hydrogenase. This Shewanella baltica (strain OS223) protein is Hydrogenase maturation factor HypA.